The sequence spans 334 residues: Glucokinase-like protein XF_1460 (334 aa).

An ATP-binding site is contributed by 18 to 23 (ADVGGT).

It belongs to the bacterial glucokinase family.

This chain is Glucokinase-like protein XF_1460, found in Xylella fastidiosa (strain 9a5c).